We begin with the raw amino-acid sequence, 190 residues long: Probable molybdenum cofactor guanylyltransferase (190 aa).

Residues 9 to 11 (LCG), Lys21, Asp65, and Asp94 contribute to the GTP site. Mg(2+) is bound at residue Asp94.

This sequence belongs to the MobA family. Mg(2+) serves as cofactor.

It localises to the cytoplasm. The enzyme catalyses Mo-molybdopterin + GTP + H(+) = Mo-molybdopterin guanine dinucleotide + diphosphate. Its function is as follows. Transfers a GMP moiety from GTP to Mo-molybdopterin (Mo-MPT) cofactor (Moco or molybdenum cofactor) to form Mo-molybdopterin guanine dinucleotide (Mo-MGD) cofactor. The protein is Probable molybdenum cofactor guanylyltransferase of Flavobacterium johnsoniae (strain ATCC 17061 / DSM 2064 / JCM 8514 / BCRC 14874 / CCUG 350202 / NBRC 14942 / NCIMB 11054 / UW101) (Cytophaga johnsonae).